A 350-amino-acid polypeptide reads, in one-letter code: 5'-tyrosyl-DNA phosphodiesterase (350 aa).

Positions 113 to 117 (NIDGL) are interaction with 5' end of substrate DNA. Positions 115 and 145 each coordinate Mg(2+). The interaction with 5' end of substrate DNA stretch occupies residues 219–224 (HLESMR). The Proton donor/acceptor role is filled by Asp-258. The interval 260 to 262 (NLR) is interaction with 5' end of substrate DNA.

Belongs to the CCR4/nocturin family. TTRAP/TDP2 subfamily. Mg(2+) serves as cofactor. It depends on Mn(2+) as a cofactor.

It localises to the nucleus. The protein resides in the PML body. In terms of biological role, DNA repair enzyme that can remove a variety of covalent adducts from DNA through hydrolysis of a 5'-phosphodiester bond, giving rise to DNA with a free 5' phosphate. Catalyzes the hydrolysis of dead-end complexes between DNA and the topoisomerase 2 (top2) active site tyrosine residue. Hydrolyzes 5'-phosphoglycolates on protruding 5' ends on DNA double-strand breaks (DSBs) due to DNA damage by radiation and free radicals. This chain is 5'-tyrosyl-DNA phosphodiesterase, found in Caenorhabditis briggsae.